Reading from the N-terminus, the 1071-residue chain is DNA-directed RNA polymerase subunit beta (1071 aa).

Belongs to the RNA polymerase beta chain family. In terms of assembly, in plastids the minimal PEP RNA polymerase catalytic core is composed of four subunits: alpha, beta, beta', and beta''. When a (nuclear-encoded) sigma factor is associated with the core the holoenzyme is formed, which can initiate transcription.

It is found in the plastid. The protein resides in the chloroplast. The enzyme catalyses RNA(n) + a ribonucleoside 5'-triphosphate = RNA(n+1) + diphosphate. Functionally, DNA-dependent RNA polymerase catalyzes the transcription of DNA into RNA using the four ribonucleoside triphosphates as substrates. This is DNA-directed RNA polymerase subunit beta from Drimys granadensis.